The sequence spans 419 residues: Multifunctional CCA protein (419 aa).

ATP-binding residues include Gly-8 and Arg-11. Gly-8 and Arg-11 together coordinate CTP. Mg(2+) is bound by residues Asp-21 and Asp-23. 3 residues coordinate ATP: Arg-91, Arg-137, and Arg-140. Positions 91, 137, and 140 each coordinate CTP. The region spanning 226-327 is the HD domain; sequence TGVHLMMVLD…VRLFDRCDAW (102 aa).

The protein belongs to the tRNA nucleotidyltransferase/poly(A) polymerase family. Bacterial CCA-adding enzyme type 1 subfamily. Monomer. Can also form homodimers and oligomers. It depends on Mg(2+) as a cofactor. Ni(2+) serves as cofactor.

The catalysed reaction is a tRNA precursor + 2 CTP + ATP = a tRNA with a 3' CCA end + 3 diphosphate. It carries out the reaction a tRNA with a 3' CCA end + 2 CTP + ATP = a tRNA with a 3' CCACCA end + 3 diphosphate. Functionally, catalyzes the addition and repair of the essential 3'-terminal CCA sequence in tRNAs without using a nucleic acid template. Adds these three nucleotides in the order of C, C, and A to the tRNA nucleotide-73, using CTP and ATP as substrates and producing inorganic pyrophosphate. tRNA 3'-terminal CCA addition is required both for tRNA processing and repair. Also involved in tRNA surveillance by mediating tandem CCA addition to generate a CCACCA at the 3' terminus of unstable tRNAs. While stable tRNAs receive only 3'-terminal CCA, unstable tRNAs are marked with CCACCA and rapidly degraded. The chain is Multifunctional CCA protein from Leptothrix cholodnii (strain ATCC 51168 / LMG 8142 / SP-6) (Leptothrix discophora (strain SP-6)).